A 947-amino-acid chain; its full sequence is DNA topoisomerase 1 (947 aa).

The Toprim domain occupies 16 to 140; it reads RRLVIVESPT…VKRMVFHEIT (125 aa). 2 residues coordinate Mg(2+): glutamate 22 and aspartate 109. Positions 155–614 constitute a Topo IA-type catalytic domain; that stretch reads DIDLVDAQET…FYFGGNHGVS (460 aa). Residues 189-194 are interaction with DNA; sequence SAGRVQ. Residue tyrosine 343 is the O-(5'-phospho-DNA)-tyrosine intermediate of the active site. Disordered stretches follow at residues 733–771, 846–888, and 910–947; these read VLPKHDDDYGAADQGTKKTKKGRRASASQGPKPRTGSLL, KRAG…GETN, and ADRRARGPVKRPAKKARKVPAKKAARLAPARGISQSPR. The segment covering 915–934 has biased composition (basic residues); it reads RGPVKRPAKKARKVPAKKAA.

Belongs to the type IA topoisomerase family. As to quaternary structure, monomer. Requires Mg(2+) as cofactor.

The catalysed reaction is ATP-independent breakage of single-stranded DNA, followed by passage and rejoining.. Releases the supercoiling and torsional tension of DNA, which is introduced during the DNA replication and transcription, by transiently cleaving and rejoining one strand of the DNA duplex. Introduces a single-strand break via transesterification at a target site in duplex DNA. The scissile phosphodiester is attacked by the catalytic tyrosine of the enzyme, resulting in the formation of a DNA-(5'-phosphotyrosyl)-enzyme intermediate and the expulsion of a 3'-OH DNA strand. The free DNA strand then undergoes passage around the unbroken strand, thus removing DNA supercoils. Finally, in the religation step, the DNA 3'-OH attacks the covalent intermediate to expel the active-site tyrosine and restore the DNA phosphodiester backbone. This chain is DNA topoisomerase 1, found in Mycobacterium leprae (strain TN).